The chain runs to 386 residues: Succinate--CoA ligase [ADP-forming] subunit beta (386 aa).

Residues 9 to 244 enclose the ATP-grasp domain; the sequence is KAVLRSYGVS…LDEEDSKEIE (236 aa). Residues lysine 46, 53–55, glutamate 99, cysteine 102, and glutamate 107 each bind ATP; that span reads GRG. Residues asparagine 199 and aspartate 213 each contribute to the Mg(2+) site. Residues asparagine 264 and 321-323 contribute to the substrate site; that span reads GIM.

Belongs to the succinate/malate CoA ligase beta subunit family. As to quaternary structure, heterotetramer of two alpha and two beta subunits. The cofactor is Mg(2+).

It catalyses the reaction succinate + ATP + CoA = succinyl-CoA + ADP + phosphate. The catalysed reaction is GTP + succinate + CoA = succinyl-CoA + GDP + phosphate. It participates in carbohydrate metabolism; tricarboxylic acid cycle; succinate from succinyl-CoA (ligase route): step 1/1. Succinyl-CoA synthetase functions in the citric acid cycle (TCA), coupling the hydrolysis of succinyl-CoA to the synthesis of either ATP or GTP and thus represents the only step of substrate-level phosphorylation in the TCA. The beta subunit provides nucleotide specificity of the enzyme and binds the substrate succinate, while the binding sites for coenzyme A and phosphate are found in the alpha subunit. This Bacillus cereus (strain ATCC 14579 / DSM 31 / CCUG 7414 / JCM 2152 / NBRC 15305 / NCIMB 9373 / NCTC 2599 / NRRL B-3711) protein is Succinate--CoA ligase [ADP-forming] subunit beta.